The primary structure comprises 196 residues: Large ribosomal subunit protein eL15 (196 aa).

The tract at residues 153–196 (DPSSRGRATRGKTSAGRKGRGMATRGKGTEKTRPSIRAYKSRGK) is disordered. A compositionally biased stretch (basic residues) spans 159-172 (RATRGKTSAGRKGR).

The protein belongs to the eukaryotic ribosomal protein eL15 family.

This chain is Large ribosomal subunit protein eL15, found in Methanosarcina acetivorans (strain ATCC 35395 / DSM 2834 / JCM 12185 / C2A).